The chain runs to 513 residues: Probable lipid II flippase MurJ (513 aa).

Helical transmembrane passes span 3–23, 25–45, 83–103, 133–153, 162–182, 186–206, 221–241, 245–265, 271–291, 313–333, 354–374, 382–402, 405–425, 441–461, and 481–501; these read ILKS…LGFM, DLLI…FLAF, FISN…AFGI, IMFP…ILNA, YSSI…TAYF, ILSL…YQFP, ILNL…LGMS, VSII…ISWI, LVEF…LPLL, LVCI…ESLI, IEFY…LAGF, TPMK…IFFI, FQYT…FFLL, WLRF…LLFI, and LFYI…CLGL.

Belongs to the MurJ/MviN family.

Its subcellular location is the cell inner membrane. Its pathway is cell wall biogenesis; peptidoglycan biosynthesis. Involved in peptidoglycan biosynthesis. Transports lipid-linked peptidoglycan precursors from the inner to the outer leaflet of the cytoplasmic membrane. This is Probable lipid II flippase MurJ from Buchnera aphidicola subsp. Baizongia pistaciae (strain Bp).